The chain runs to 278 residues: MHKAGLLGLCARAWNSVRMASSGMTRRDPLANKVALVTASTDGIGFAIARRLAQDGAHVVVSSRKQQNVDQAVATLQGEGLSVTGTVCHVGKAEDRERLVATAVKLHGGIDILVSNAAVNPFFGSIMDVTEEVWDKTLDINVKAPALMTKAVVPEMEKRGGGSVVIVSSIAAFSPSPGFSPYNVSKTALLGLTKTLAIELAPRNIRVNCLAPGLIKTSFSRMLWMDKEKEESMKETLRIRRLGEPEDCAGIVSFLCSEDASYITGETVVVGGGTPSRL.

Position 36-60 (36-60 (LVTASTDGIGFAIARRLAQDGAHVV)) interacts with NADP(+). Lys92 carries the N6-acetyllysine; alternate modification. Lys92 carries the N6-succinyllysine; alternate modification. Lys105 is subject to N6-acetyllysine. At Ile140 the chain carries Phosphoserine. Ser169 is a substrate binding site. Tyr182 (proton acceptor) is an active-site residue. Position 186 (Lys186) interacts with NADP(+). Position 216 is an N6-acetyllysine; alternate (Lys216). An N6-succinyllysine; alternate modification is found at Lys216. Ser220 carries the phosphoserine modification. An N6-succinyllysine mark is found at Lys227 and Lys234. The short motif at 276-278 (SRL) is the Peroxisomal targeting signal element.

The protein belongs to the short-chain dehydrogenases/reductases (SDR) family. As to quaternary structure, homotetramer. Predominantly expressed in normal cervix (at protein level). In terms of tissue distribution, expressed in some neoplastic cervical tissues, but not in normal cervix (at protein level). As to expression, expressed in a few neoplastic cervical tissues. High expression in liver.

It is found in the peroxisome. The protein resides in the nucleus. It catalyses the reaction a secondary alcohol + NADP(+) = a ketone + NADPH + H(+). The catalysed reaction is 3beta-hydroxy-5beta-pregnane-20-one + NADP(+) = 5beta-pregnan-3,20-dione + NADPH + H(+). It carries out the reaction 5beta-dihydrotestosterone + NADPH + H(+) = 5beta-androstane-3beta,17beta-diol + NADP(+). The enzyme catalyses 5beta-androstane-3,17-dione + NADPH + H(+) = 3beta-hydroxy-5beta-androstane-17-one + NADP(+). It catalyses the reaction isatin + NADPH + H(+) = 3-hydroxyindolin-2-one + NADP(+). The catalysed reaction is lithocholate + NADP(+) = 3-oxo-5beta-cholan-24-oate + NADPH + H(+). It carries out the reaction 3-oxo-5beta-cholan-24-oate + NADPH + H(+) = isolithocholate + NADP(+). Its activity is regulated as follows. Inhibited by flavonoids (quercetin and genistein), cetylpyridium chloride, phenylhexane and valproic acid. Low inhibition is observed with fatty acids (myristic acid and lauric acid). No significant inhibition is observed with barbital, dicumarol, indomethacin, metyrapone, ethacrynic acid, disulfiram, hexestrol and benzodiazepines (diazepam and nitrazepam). In terms of biological role, NADPH-dependent oxidoreductase which catalyzes the reduction of a variety of compounds bearing carbonyl groups including ketosteroids, alpha-dicarbonyl compounds, aldehydes, aromatic ketones and quinones. Reduces 3-ketosteroids and benzil into 3beta-hydroxysteroids and R-benzoin, respectively, in contrast to the stereoselectivity of non-primate DHRS4s which produce 3alpha-hydroxysteroids and S-benzoin. Diplays low activity toward all-trans-retinal and no activity toward 9-cis-retinal as compared to non-primate mammals. In the reverse reaction, catalyze the NAD-dependent oxidation of 3beta-hydroxysteroids and alcohol, but with much lower efficiency. Involved in the metabolism of 3beta-hydroxysteroids, isatin and xenobiotic carbonyl compounds. No detected catalytic activity in vitro, possibly due to the lack of catalytic site. Its function is as follows. NADPH-dependent oxidoreductase which catalyzes the reduction of a variety of compounds bearing carbonyl groups including ketosteroids, alpha-dicarbonyl compounds, aldehydes, aromatic ketones and quinones. Involved in the metabolism of 3beta-hydroxysteroids, isatin and xenobiotic carbonyl compounds. Has a higher catalytic activity for xenobiotic alpha-dicarbonyl compounds, sucha as benzil, than isoform 1 and is involved in benzil detoxification. The chain is Dehydrogenase/reductase SDR family member 4 from Homo sapiens (Human).